The sequence spans 151 residues: IFN signaling evasion protein OPG029 (151 aa).

The protein belongs to the orthopoxvirus OPG029 family. Interacts with host TANK, TBKBP1 and AZI2; these interactions prevent interferon production. Interacts with host STAT2.

In terms of biological role, prevents establishment of cellular antiviral state by blocking virus-induced phosphorylation and activation of interferon regulatory factors 3/IRF3 and 7/IRF7, transcription factors critical for the induction of interferons alpha and beta. This blockage is produced through the inhibition of host TBK1, by binding host TBK1 adapter proteins TBKBP1 and AZI2, thereby producing a strong inhibition of the phosphorylation and activation of IRF3 and IRF7. Also acts as an inhibitor of the cellular response to type I IFN by interacting with host STAT2. Mechanistically, exerts its inhibitory effect after host ISGF3 complex (composed of STAT1, STAT2 and IRF9) binding to the interferon stimulated response element (ISRE). This Vaccinia virus (strain Western Reserve) (VACV) protein is IFN signaling evasion protein OPG029 (OPG029).